Reading from the N-terminus, the 103-residue chain is Small ribosomal subunit protein uS10 (103 aa).

Belongs to the universal ribosomal protein uS10 family. In terms of assembly, part of the 30S ribosomal subunit.

In terms of biological role, involved in the binding of tRNA to the ribosomes. The sequence is that of Small ribosomal subunit protein uS10 from Pseudomonas aeruginosa (strain LESB58).